The following is a 613-amino-acid chain: Tetratricopeptide repeat protein 39A (613 aa).

TPR repeat units lie at residues 315 to 348 (AIFL…QQHW), 505 to 538 (CLVK…EKKI), and 546 to 579 (PNAL…YKNY).

It belongs to the TTC39 family.

In Homo sapiens (Human), this protein is Tetratricopeptide repeat protein 39A (TTC39A).